Here is a 418-residue protein sequence, read N- to C-terminus: Actin-related protein 3-A (418 aa).

It belongs to the actin family. ARP3 subfamily. Component of the Arp2/3 complex composed of actr2/arp2, actr3/arp3, arpc1 (arpc1a or arpc1b), arpc2, arpc3, arpc4 and arpc5.

The protein localises to the cytoplasm. Its subcellular location is the cytoskeleton. The protein resides in the cell projection. It is found in the nucleus. Functionally, ATP-binding component of the Arp2/3 complex, a multiprotein complex that mediates actin polymerization upon stimulation by nucleation-promoting factor (NPF). The Arp2/3 complex mediates the formation of branched actin networks in the cytoplasm, providing the force for cell motility. Seems to contact the pointed end of the daughter actin filament. In addition to its role in the cytoplasmic cytoskeleton, the Arp2/3 complex also promotes actin polymerization in the nucleus, thereby regulating gene transcription and repair of damaged DNA. The Arp2/3 complex promotes homologous recombination (HR) repair in response to DNA damage by promoting nuclear actin polymerization, leading to drive motility of double-strand breaks (DSBs). The chain is Actin-related protein 3-A from Xenopus laevis (African clawed frog).